We begin with the raw amino-acid sequence, 478 residues long: Antiviral innate immune response effector IFIT1 (478 aa).

TPR repeat units lie at residues 52 to 85, 95 to 128, 141 to 174, 183 to 216, 218 to 249, and 251 to 284; these read VGIHNLLAYVKHLKGQNEEALKSLKEAENLMQEE, LVTWGNFAWMYYHMGRLAEAQTYLDKVENICKKL, IDCEEGWALLKCGGKNYERAKACFEKVLEVDPEN, ISAYRLDGFKLATKNHKPFSLLPLRQAVRLNPDN, YIKVLLALKLQDEGQEAEGEKYIEEALANMSS, and TYVFRYAAKFYRRKGSVDKALELLKKALQETPTS. Residue W147 participates in mRNA binding. Residue G190 participates in RNA binding. RNA-binding residues include K259, H289, Q290, and K336. TPR repeat units follow at residues 305 to 339, 340 to 373, 378 to 412, and 437 to 470; these read ATKGQPRGQNREKLDKMIRSAIFHFESAVEKKPTF, EVAHLDLARMYIEAGNHRKAEENFQKLLCMKPVV, QDIHFHYGRFQEFQKKSDVNAIIHYLKAIKIEQAS, and LESLSLLGFVYKLEGNMNEALEYYERALRLAADF.

The protein belongs to the IFIT family. As to quaternary structure, component of an interferon-dependent multiprotein complex, at least composed of IFIT1, IFIT2 and IFIT3. Interacts (via TPR repeats 1-4) with RPL15. Interacts with STING1/MITA; could disrupt STING1 interaction with MAVS or TBK1, acting as a negative-feedback regulator of virus-triggered signaling. Interacts with EIF3E; this could be an alternative way to inhibit translation. Phosphorylated. Post-translationally, ISGylated.

The protein resides in the cytoplasm. Its function is as follows. Plays a key role in the innate immune response as part of an interferon-dependent multiprotein complex, recognizing and sequestering viral RNAs that lack host-specific 2'-O-methylation at their 5' cap. By distinguishing these RNAs from host mRNAs, inhibits their translation by competing with the translation initiation factor eIF4E. Could also prevent viral replication through its interaction with DNA replication origin-binding protein E1 of several viruses. Causes the translocation of E1 from the nucleus to the cytoplasm and can also inhibit its helicase activity in vitro. Exhibits antiviral activity against many viruses from the Flaviviridae (West Nile virus, Dengue virus, hepatitis C virus), Coronaviridae (human 229E coronavirus, SARS-CoV-2 and SARS-CoV), Poxviridae (vaccinia virus) and Togaviridae (Sindbis virus) families. The chain is Antiviral innate immune response effector IFIT1 from Homo sapiens (Human).